The sequence spans 137 residues: Large ribosomal subunit protein uL16 (137 aa).

This sequence belongs to the universal ribosomal protein uL16 family. In terms of assembly, part of the 50S ribosomal subunit.

Its function is as follows. Binds 23S rRNA and is also seen to make contacts with the A and possibly P site tRNAs. The polypeptide is Large ribosomal subunit protein uL16 (Rhodopseudomonas palustris (strain HaA2)).